Consider the following 256-residue polypeptide: Enolase-phosphatase E1 (256 aa).

Mg(2+)-binding residues include aspartate 14 and glutamate 16. Residues 142–143 and lysine 176 each bind substrate; that span reads SS. Aspartate 201 is a Mg(2+) binding site.

Belongs to the HAD-like hydrolase superfamily. MasA/MtnC family. In terms of assembly, monomer. Requires Mg(2+) as cofactor.

It is found in the cytoplasm. Its subcellular location is the nucleus. The catalysed reaction is 5-methylsulfanyl-2,3-dioxopentyl phosphate + H2O = 1,2-dihydroxy-5-(methylsulfanyl)pent-1-en-3-one + phosphate. The protein operates within amino-acid biosynthesis; L-methionine biosynthesis via salvage pathway; L-methionine from S-methyl-5-thio-alpha-D-ribose 1-phosphate: step 3/6. It participates in amino-acid biosynthesis; L-methionine biosynthesis via salvage pathway; L-methionine from S-methyl-5-thio-alpha-D-ribose 1-phosphate: step 4/6. Its function is as follows. Bifunctional enzyme that catalyzes the enolization of 2,3-diketo-5-methylthiopentyl-1-phosphate (DK-MTP-1-P) into the intermediate 2-hydroxy-3-keto-5-methylthiopentenyl-1-phosphate (HK-MTPenyl-1-P), which is then dephosphorylated to form the acireductone 1,2-dihydroxy-3-keto-5-methylthiopentene (DHK-MTPene). The polypeptide is Enolase-phosphatase E1 (Drosophila simulans (Fruit fly)).